The primary structure comprises 305 residues: Putative F-box protein PP2-B8 (305 aa).

Residues 33-79 enclose the F-box domain; it reads VAELDDLPEECVSIIVSFTSPQDACVLASVSKTFASAVKSDIVWEKF.

In Arabidopsis thaliana (Mouse-ear cress), this protein is Putative F-box protein PP2-B8 (PP2B8).